Reading from the N-terminus, the 79-residue chain is Small ribosomal subunit protein bS21 (79 aa).

The segment at 58 to 79 (ARKKMQREGLLPMKPKPMPGMR) is disordered.

It belongs to the bacterial ribosomal protein bS21 family.

In Beijerinckia indica subsp. indica (strain ATCC 9039 / DSM 1715 / NCIMB 8712), this protein is Small ribosomal subunit protein bS21.